A 102-amino-acid polypeptide reads, in one-letter code: Putative ribosomal protein uL13-like (102 aa).

It belongs to the universal ribosomal protein uL13 family.

This is Putative ribosomal protein uL13-like (RPL13AP3) from Homo sapiens (Human).